We begin with the raw amino-acid sequence, 484 residues long: RuvB-like helicase 1 (484 aa).

Residues Met1 to Thr11 show a composition bias toward low complexity. Residues Met1–Leu27 are disordered. Gly87–Thr94 provides a ligand contact to ATP.

Belongs to the RuvB family. May form heterododecamers with RVB2. Component of the SWR1 chromatin remodeling complex, the INO80 chromatin remodeling complex, and of the R2TP complex.

The protein resides in the nucleus. The catalysed reaction is ATP + H2O = ADP + phosphate + H(+). In terms of biological role, DNA helicase which participates in several chromatin remodeling complexes, including the SWR1 and the INO80 complexes. The SWR1 complex mediates the ATP-dependent exchange of histone H2A for the H2A variant HZT1 leading to transcriptional regulation of selected genes by chromatin remodeling. The INO80 complex remodels chromatin by shifting nucleosomes and is involved in DNA repair. Also involved in pre-rRNA processing. The chain is RuvB-like helicase 1 (RVB1) from Cryptococcus neoformans var. neoformans serotype D (strain B-3501A) (Filobasidiella neoformans).